Reading from the N-terminus, the 220-residue chain is Small ribosomal subunit protein uS3 (220 aa).

The 69-residue stretch at 39 to 107 (IREHVEGRLK…RVHINISEIK (69 aa)) folds into the KH type-2 domain.

Belongs to the universal ribosomal protein uS3 family. In terms of assembly, part of the 30S ribosomal subunit. Forms a tight complex with proteins S10 and S14.

In terms of biological role, binds the lower part of the 30S subunit head. Binds mRNA in the 70S ribosome, positioning it for translation. In Shouchella clausii (strain KSM-K16) (Alkalihalobacillus clausii), this protein is Small ribosomal subunit protein uS3.